We begin with the raw amino-acid sequence, 107 residues long: U1-lycotoxin-Ls1p (107 aa).

Residues 1-20 form the signal peptide; the sequence is MMKVLVVVALLVTLISYSSS. Residues 21 to 41 constitute a propeptide that is removed on maturation; the sequence is EGIDDLEADELLSLMANEQTR. Disulfide bonds link cysteine 44–cysteine 59, cysteine 51–cysteine 68, cysteine 58–cysteine 86, and cysteine 70–cysteine 84.

The protein belongs to the neurotoxin 19 (CSTX) family. 04 (U1-Lctx) subfamily. In terms of tissue distribution, expressed by the venom gland.

It is found in the secreted. This chain is U1-lycotoxin-Ls1p, found in Lycosa singoriensis (Wolf spider).